A 2116-amino-acid chain; its full sequence is Non-structural polyprotein p200 (2116 aa).

Residues 36 to 49 (EVRDVVTAAQKRAI) are required for efficient proteolysis and P150-P90 interaction. The Alphavirus-like MT domain maps to 57–247 (VFTQMQVSDH…TRPCTTRIYQ (191 aa)). The tract at residues 715 to 805 (GQLALTSPPP…PATPARADPD (91 aa)) is disordered. 2 stretches are compositionally biased toward pro residues: residues 721 to 730 (SPPPDNPPPP) and 744 to 767 (GPPP…PPRA). Short sequence motifs (pxxPxR; class II SH3-binding) lie at residues 727–732 (PPPPRR), 747–752 (PPAPAR), and 761–766 (PPAPPR). The region spanning 806 to 985 (SDIVESYARA…LMHASVLVGA (180 aa)) is the Macro domain. The disordered stretch occupies residues 990–1028 (RRVSPPPTEPPASRPADDPGRSAQRTAPPPAAPPGDAAA). Over residues 993-1002 (SPPPTEPPAS) the composition is skewed to pro residues. The Peptidase C27 domain maps to 1000 to 1301 (PASRPADDPG…WLAVPLSRGG (302 aa)). C1152 acts as the For cysteine protease activity in catalysis. The interval 1152–1183 (CWLRAAANVAQAARACGAYTSAGCPKCAYGRA) is interaction with host CALM1. Residues C1175, C1178, C1227, and H1273 each contribute to the Zn(2+) site. The tract at residues 1193 to 1228 (FAALSQRWIASHADASLDGTGDPLDPLMATVGCACS) is EF-hand-like. H1273 functions as the For cysteine protease activity in the catalytic mechanism. The region spanning 1320-1468 (EVRRLGDDAM…VPDRWPTERS (149 aa)) is the (+)RNA virus helicase ATP-binding domain. A ribonucleoside 5'-triphosphate is bound at residue 1352-1359 (MAAGAGKT). A (+)RNA virus helicase C-terminal domain is found at 1469 to 1609 (RHTWRFPDCW…ELKEVPAGID (141 aa)). An involved in P150-P90 interaction region spans residues 1700–1900 (YRAGEDGSTL…VELEISAALL (201 aa)). One can recognise a RdRp catalytic domain in the interval 1870 to 1981 (TNAIEVDFTE…FLPEGARSAA (112 aa)). The Human RB1 binding signature appears at 1902–1906 (LPCAE).

In terms of assembly, interacts with RNA-directed RNA polymerase p90. Interacts with host CALM1; this interaction is necessary for the protease activity and viral infectivity. Interacts with host C1QBP. Interacts with the capsid protein. As to quaternary structure, interacts with human RB1/retinoblastoma protein. Interacts with protease/methyltransferase p150. It depends on Zn(2+) as a cofactor. In terms of processing, specific enzymatic cleavage by its own cysteine protease yield mature proteins p150 and p90.

The protein localises to the host membrane. The protein resides in the host cytoplasm. It is found in the host perinuclear region. The enzyme catalyses RNA(n) + a ribonucleoside 5'-triphosphate = RNA(n+1) + diphosphate. It carries out the reaction a ribonucleoside 5'-triphosphate + H2O = a ribonucleoside 5'-diphosphate + phosphate + H(+). The catalysed reaction is ATP + H2O = ADP + phosphate + H(+). Its function is as follows. Probable principal replicase for the negative-strand DNA, which replicates the 40S (+) genomic RNA into (-) antigenomic RNA. It cannot replicate the (-) into (+) until cleaved into p150 and p90 mature proteins. In terms of biological role, protease that cleaves the precursor polyprotein into two mature products. Together with RNA-directed RNA polymerase p90, replicates the 40S genomic and antigenomic RNA by recognizing replications specific signals. The heterodimer P150/p90 is probably the principal replicase for positive-strand genomic RNA and the 24S subgenomic RNA, which codes for structural proteins. Responsible for the mRNA-capping of the viral mRNAs. This function is necessary since all viral RNAs are synthesized in the cytoplasm, and host capping enzymes are restricted to the nucleus. Forms fibers late in the infection that may be involved in cell-to-cell spread of the virus RNA in the absence of virus particle formation. Together with protease/methyltransferase p150, replicates the 40S genomic and antigenomic RNA by recognizing replications specific signals. The heterodimer P150/p90 is probably the principal replicase for positive-strand genomic RNA and the 24S subgenomic RNA, which codes for structural proteins. A helicase activity is probably also present. The protein is Non-structural polyprotein p200 of Rubella virus (strain BRDII) (RUBV).